The primary structure comprises 94 residues: Scorpine-like-1 (94 aa).

A signal peptide spans 1-18 (MNTKFTVLIFLGVIVVSY). Residues 54–94 (EYGCMMDISWNKDCQRHCQSTEQKDGICHGMKCKCGKPRSY) enclose the BetaSPN-type CS-alpha/beta domain. Disulfide bonds link Cys57–Cys81, Cys67–Cys86, and Cys71–Cys88.

It belongs to the long chain scorpion toxin family. Class 3 subfamily. In terms of tissue distribution, expressed by the venom gland.

Its subcellular location is the secreted. Has antibacterial activity. The chain is Scorpine-like-1 from Urodacus yaschenkoi (Inland robust scorpion).